Consider the following 525-residue polypeptide: Keratin, type I cytoskeletal 24 (525 aa).

The tract at residues 1–30 (MSCSSRASSSRAGGSSSARVSAGGSSFSSG) is disordered. The interval 1-139 (MSCSSRASSS…VGDGGLFSGG (139 aa)) is head. Residues 140-175 (EKQTMQNLNDRLANYLDKVRALEEANTDLENKIKEW) are coil 1A. Positions 140 to 456 (EKQTMQNLND…RLLDGEGGGS (317 aa)) constitute an IF rod domain. A linker 1 region spans residues 176–198 (YDKYGPGSGDGGSGRDYSKYYSI). The tract at residues 199-290 (IEDLRNQIIA…KNHEEEMKNM (92 aa)) is coil 1B. Residues 291 to 313 (QGSSGGEVTVEMNAAPGTDLTKL) form a linker 12 region. Positions 314-452 (LNDMRAQYEE…ETYRRLLDGE (139 aa)) are coil 2. Residues 453–525 (GGGSSFAEFG…VSSISEVKVK (73 aa)) are tail. The disordered stretch occupies residues 459-497 (AEFGGRNSGSVNMGSRDLVSGDSRSGSCSGQGRDSSKTR). A compositionally biased stretch (polar residues) spans 480-491 (DSRSGSCSGQGR).

Belongs to the intermediate filament family. In terms of assembly, heterotetramer of two type I and two type II keratins. As to expression, highly expressed in keratinocytes, placenta, colon and spleen. Expressed at lower level in thymus and testis.

The chain is Keratin, type I cytoskeletal 24 (KRT24) from Homo sapiens (Human).